A 364-amino-acid polypeptide reads, in one-letter code: DNA replication and repair protein RecF (364 aa).

30 to 37 (GNNGQGKT) contributes to the ATP binding site.

Belongs to the RecF family.

The protein resides in the cytoplasm. The RecF protein is involved in DNA metabolism; it is required for DNA replication and normal SOS inducibility. RecF binds preferentially to single-stranded, linear DNA. It also seems to bind ATP. The polypeptide is DNA replication and repair protein RecF (Geotalea daltonii (strain DSM 22248 / JCM 15807 / FRC-32) (Geobacter daltonii)).